The following is a 1508-amino-acid chain: Pleiotropic ABC efflux transporter of multiple drugs CDR1 (1508 aa).

The segment at 1–30 is disordered; the sequence is MSEKPFVDAPPPEDGVAHQVSPHDNGSLSE. Over 1–524 the chain is Cytoplasmic; it reads MSEKPFVDAP…NFLRMKGDPS (524 aa). The ABC transporter 1 domain maps to 165–415; it reads DYWHDMRKID…FLDMGYECPQ (251 aa). Residues 525-545 form a helical membrane-spanning segment; sequence IVIFSIFGQGVMGLILSSVFY. Topologically, residues 546-559 are extracellular; sequence NLQPTTGSFYYRGA. The helical transmembrane segment at 560–580 threads the bilayer; the sequence is AMFFAVLFNAFASLLEIMSLF. At 581–608 the chain is on the cytoplasmic side; that stretch reads EARPIVEKHKKYALYRPSADALASIISE. A helical membrane pass occupies residues 609–629; the sequence is LPVKLCMSTCFNFSFYFMVHF. At 630-633 the chain is on the extracellular side; it reads RRDP. Residues 634-654 traverse the membrane as a helical segment; sequence GRFFFYWLFCGLCTLCMSHMF. Over 655–673 the chain is Cytoplasmic; the sequence is RSLGAVSTSLAAAMTPATS. A helical transmembrane segment spans residues 674-694; that stretch reads VLLAMVIFTGFVIPIPSMLGW. The Extracellular segment spans residues 695 to 775; sequence CRWIQYINPV…EYVNAHKWRN (81 aa). Residues 776-796 traverse the membrane as a helical segment; the sequence is LGIVVAYIVVFLGVYIALTEF. Residues 797 to 1203 are Cytoplasmic-facing; the sequence is NKGAMQKGEI…TFQQYWRSPG (407 aa). Positions 839-860 are disordered; it reads KISYSDAMEKDSGESSTSDDKL. The span at 845 to 860 shows a compositional bias: basic and acidic residues; it reads AMEKDSGESSTSDDKL. The region spanning 867 to 1110 is the ABC transporter 2 domain; sequence FHWKDLTYQV…GLIDYFEKHG (244 aa). 903 to 910 lines the ATP pocket; it reads GASGAGKT. The chain crosses the membrane as a helical span at residues 1204–1224; that stretch reads YIYSKFFLVITASLFNGFAFF. The Extracellular portion of the chain corresponds to 1225–1239; it reads HSGTSQQGLQNQMFS. A helical membrane pass occupies residues 1240-1260; that stretch reads MFMFYMPLQTLIQQMLPYYVM. Residues 1261–1288 lie on the Cytoplasmic side of the membrane; that stretch reads QREIYEVREAPSRTFSWFAFIASQITTE. A helical membrane pass occupies residues 1289-1309; the sequence is IPFQVVLGTVAFFCWYYPVGL. Over 1310-1326 the chain is Extracellular; sequence YQNATPTDTVHERGALM. The chain crosses the membrane as a helical span at residues 1327-1347; it reads WLLVTAFYVYTISLGQMVVAF. Topologically, residues 1348–1362 are cytoplasmic; that stretch reads MEIADNAANMVNLMF. The chain crosses the membrane as a helical span at residues 1363–1383; the sequence is IMCLNFCGVLATPEALPGFWI. Topologically, residues 1384–1475 are extracellular; that stretch reads FMYRCNPFTY…HAVYSERWRN (92 aa). Residues 1476 to 1496 traverse the membrane as a helical segment; sequence FGIFIAFIAINMIGTIFFYWL. The Cytoplasmic segment spans residues 1497-1508; sequence ARVPKSSKSKNH.

The protein belongs to the ABC transporter superfamily.

The protein resides in the cell membrane. The catalysed reaction is fluconazole(in) + ATP + H2O = fluconazole(out) + ADP + phosphate + H(+). It carries out the reaction itraconazole(in) + ATP + H2O = itraconazole(out) + ADP + phosphate + H(+). The enzyme catalyses voriconazole(in) + ATP + H2O = voriconazole(out) + ADP + phosphate + H(+). With respect to regulation, the bis-benzodioxolylindolinone azoffluxin acts as an inhibitor of the transporter activity. Clorgyline analogs M19 and M25 inhibit the transcporter activity by uncoupling CDR1 ATPase activity from the active transport of substrates. Activity is also inhibited by beauvericin and oligomycin. Pleiotropic ABC efflux transporter that confers resistance to numerous chemicals including itraconazole, fluconazole, voriconazole and posaconazole. The polypeptide is Pleiotropic ABC efflux transporter of multiple drugs CDR1 (Candidozyma auris (Yeast)).